Here is a 180-residue protein sequence, read N- to C-terminus: Large ribosomal subunit protein uL5 (180 aa).

This sequence belongs to the universal ribosomal protein uL5 family. As to quaternary structure, part of the 50S ribosomal subunit; part of the 5S rRNA/L5/L18/L25 subcomplex. Contacts the 5S rRNA and the P site tRNA. Forms a bridge to the 30S subunit in the 70S ribosome.

Functionally, this is one of the proteins that bind and probably mediate the attachment of the 5S RNA into the large ribosomal subunit, where it forms part of the central protuberance. In the 70S ribosome it contacts protein S13 of the 30S subunit (bridge B1b), connecting the 2 subunits; this bridge is implicated in subunit movement. Contacts the P site tRNA; the 5S rRNA and some of its associated proteins might help stabilize positioning of ribosome-bound tRNAs. The polypeptide is Large ribosomal subunit protein uL5 (Latilactobacillus sakei subsp. sakei (strain 23K) (Lactobacillus sakei subsp. sakei)).